A 1278-amino-acid polypeptide reads, in one-letter code: Cytoplasmic FMR1-interacting protein 2 (1278 aa).

The residue at position 1062 (Lys1062) is an N6-acetyllysine.

Belongs to the CYFIP family. As to quaternary structure, component of the WAVE1 complex composed of ABI2, CYFIP2, BRK1, NCKAP1 and WASF1/WAVE1. Interacts with FMR1, FXR1 and FXR2. Interacts with FMR1 isoform 6; the interaction occurs in a RNA-dependent manner. Interacts with RAC1 (activated form) which causes the complex to dissociate, releasing activated WASF1. The complex can also be activated by NCK1. Interacts with SHANK3; the interaction mediates the association of SHANK3 with the WAVE1 complex. Interacts with TMEM108 (via N-terminus); the interaction associates TMEM108 with the WAVE1 complex. Expressed in T-cells. Increased expression is observed in CD4(+) T-lymphocytes from patients with multiple sclerosis (at protein level).

It localises to the cytoplasm. It is found in the nucleus. Its subcellular location is the perinuclear region. The protein resides in the synapse. The protein localises to the synaptosome. Functionally, involved in T-cell adhesion and p53/TP53-dependent induction of apoptosis. Does not bind RNA. As component of the WAVE1 complex, required for BDNF-NTRK2 endocytic trafficking and signaling from early endosomes. In Homo sapiens (Human), this protein is Cytoplasmic FMR1-interacting protein 2.